A 541-amino-acid polypeptide reads, in one-letter code: Transmembrane protein 151 homolog (541 aa).

The next 3 helical transmembrane spans lie at 27–47, 73–93, and 254–274; these read GYGK…YATF, YNFV…MECW, and PWFL…SWPL. The tract at residues 503 to 541 is disordered; it reads ASISHSSSKDLKSLTLKSSSSNNNNNNSNNNNNDDPEHP. Positions 515–535 are enriched in low complexity; sequence SLTLKSSSSNNNNNNSNNNNN.

Belongs to the TMEM151 family.

The protein localises to the membrane. The chain is Transmembrane protein 151 homolog from Caenorhabditis elegans.